The chain runs to 299 residues: HTH-type transcriptional regulator ArgP (299 aa).

In terms of domain architecture, HTH lysR-type spans 4-60; it reads PDYRALQALDAVIRERGFERAAQKLCITQSAVSQRIKQLENLFGQPLLVRTVPPQPT. Residues 21 to 40 constitute a DNA-binding region (H-T-H motif); it reads FERAAQKLCITQSAVSQRIK.

This sequence belongs to the LysR transcriptional regulatory family. In terms of assembly, homodimer.

In terms of biological role, controls the transcription of genes involved in arginine and lysine metabolism. The sequence is that of HTH-type transcriptional regulator ArgP from Proteus mirabilis (strain HI4320).